The primary structure comprises 398 residues: Acetate kinase (398 aa).

Asn-9 is a Mg(2+) binding site. Residue Lys-16 participates in ATP binding. Residue Arg-89 participates in substrate binding. Asp-146 (proton donor/acceptor) is an active-site residue. ATP is bound by residues 206–210, 281–283, and 329–333; these read HLGNG, DCR, and GIGEN. Glu-384 is a binding site for Mg(2+).

This sequence belongs to the acetokinase family. Homodimer. Requires Mg(2+) as cofactor. It depends on Mn(2+) as a cofactor.

Its subcellular location is the cytoplasm. The enzyme catalyses acetate + ATP = acetyl phosphate + ADP. It participates in metabolic intermediate biosynthesis; acetyl-CoA biosynthesis; acetyl-CoA from acetate: step 1/2. Catalyzes the formation of acetyl phosphate from acetate and ATP. Can also catalyze the reverse reaction. The polypeptide is Acetate kinase (Vibrio campbellii (strain ATCC BAA-1116)).